The following is a 230-amino-acid chain: 7-cyano-7-deazaguanine synthase (230 aa).

10–20 (LSGGLDSATTA) contributes to the ATP binding site. Residues Cys-191, Cys-199, Cys-202, and Cys-205 each contribute to the Zn(2+) site.

This sequence belongs to the QueC family. Zn(2+) is required as a cofactor.

The enzyme catalyses 7-carboxy-7-deazaguanine + NH4(+) + ATP = 7-cyano-7-deazaguanine + ADP + phosphate + H2O + H(+). Its pathway is purine metabolism; 7-cyano-7-deazaguanine biosynthesis. Functionally, catalyzes the ATP-dependent conversion of 7-carboxy-7-deazaguanine (CDG) to 7-cyano-7-deazaguanine (preQ(0)). This is 7-cyano-7-deazaguanine synthase from Gloeothece citriformis (strain PCC 7424) (Cyanothece sp. (strain PCC 7424)).